A 929-amino-acid polypeptide reads, in one-letter code: MLKALFGDPNQRKVKKYQPLVVEINLLEEQVQALSDSELQAKTAEFRQRLDNGETLDDLLPEAFAVVREASRRVLGMRHFDVQLIGGMILHDGQIAEMKTGEGKTLVATLPAYLNALTGKGVHIVTVNDYLARRDAEWMGQVHRFLGLTVGLIQQQMAPQERQKSYACDITYATNSEIGFDYLRDNMATSMVEVVQRPFNYCIIDEVDSVLIDEARTPLIISGQVERPTEKYLKAAEIARLLKKDEHYEVDEKARNVLMTDEGFIEAEKLLGVSDLYDPQDPWAHYIFNAIKAKELFQRDVNYIVRNGEVVIVDEFTGRVMVGRRWSDGLHQAIEAKEGLEIQNESQTLATITYQNLFLLYPKLAGMTGTAKTEEAEFEKIYKLEVTVVPTNRPSQRRDFPDVVYKTERAKWLAVASECAEVHATGRPVLVGTTSVEKSELLSQLLRELEIPHNLLNAKPENVEREAEIIAQAGRKGAVTISTNMAGRGTDIILGGNADYMARLKVREYFMPRIVMPPSDDPMMLLGLKMDRGGGQGFSQGAQKNWKASPGLFPCEMSKEAEKLLRHAVDVAVKTYGERSLPELQAEDMLAIASEKAPTEDPVIQALRDAFNRIREEYEVVTKKEHEEVVALGGLHVIGTERHESRRIDNQLRGRAGRQGDPGSTRFFLSLEDNLLRIFGGDRIASIMNAMRIDEDMPIESPLLTRSLENAQRKVETYYYDIRKQVFEYDEVMNNQRRAIYAERRRVLEGEDLKDRVLEYAEKTMDDIIAAYVNPDLPPEEWDLEGLVAKVQEFVYLLADLRPEHLAHLSVPEMQAFLHEQVRTAYEQKEAQIEAIQPGLMRQAERFFILQQIDLLWREHLQQMDALRESVGLRGYGQEDPLVEYKREGYELFLDMMVMIRRNVVYSLFQFQPQVAPPPEQVSSSSEQG.

ATP-binding positions include Q83, G101–T105, and D491.

The protein belongs to the SecA family. Monomer and homodimer. Part of the essential Sec protein translocation apparatus which comprises SecA, SecYEG and auxiliary proteins SecDF. Other proteins may also be involved.

Its subcellular location is the cell inner membrane. The protein resides in the cellular thylakoid membrane. The protein localises to the cytoplasm. It carries out the reaction ATP + H2O + cellular proteinSide 1 = ADP + phosphate + cellular proteinSide 2.. Its function is as follows. Part of the Sec protein translocase complex. Interacts with the SecYEG preprotein conducting channel. Has a central role in coupling the hydrolysis of ATP to the transfer of proteins into and across the cell membrane, serving as an ATP-driven molecular motor driving the stepwise translocation of polypeptide chains across the membrane. Probably participates in protein translocation into and across both the cytoplasmic and thylakoid membranes in cyanobacterial cells. This Thermosynechococcus vestitus (strain NIES-2133 / IAM M-273 / BP-1) protein is Protein translocase subunit SecA.